The primary structure comprises 194 residues: Isopentenyl-diphosphate Delta-isomerase (194 aa).

Mn(2+) is bound by residues His23 and His30. In terms of domain architecture, Nudix hydrolase spans 28–162 (PLHLAFSCYV…TTDISPWCRQ (135 aa)). The active site involves Cys65. Mn(2+) is bound at residue His67. Glu85 contacts Mg(2+). Residues Glu112 and Glu114 each contribute to the Mn(2+) site. Glu114 is a catalytic residue.

Belongs to the IPP isomerase type 1 family. Mg(2+) serves as cofactor. The cofactor is Mn(2+).

It localises to the cytoplasm. The catalysed reaction is isopentenyl diphosphate = dimethylallyl diphosphate. The protein operates within isoprenoid biosynthesis; dimethylallyl diphosphate biosynthesis; dimethylallyl diphosphate from isopentenyl diphosphate: step 1/1. In terms of biological role, catalyzes the 1,3-allylic rearrangement of the homoallylic substrate isopentenyl (IPP) to its highly electrophilic allylic isomer, dimethylallyl diphosphate (DMAPP). This chain is Isopentenyl-diphosphate Delta-isomerase, found in Saccharopolyspora erythraea (strain ATCC 11635 / DSM 40517 / JCM 4748 / NBRC 13426 / NCIMB 8594 / NRRL 2338).